A 263-amino-acid chain; its full sequence is 3-deoxy-manno-octulosonate cytidylyltransferase (263 aa).

The protein belongs to the KdsB family.

Its subcellular location is the cytoplasm. It catalyses the reaction 3-deoxy-alpha-D-manno-oct-2-ulosonate + CTP = CMP-3-deoxy-beta-D-manno-octulosonate + diphosphate. It functions in the pathway nucleotide-sugar biosynthesis; CMP-3-deoxy-D-manno-octulosonate biosynthesis; CMP-3-deoxy-D-manno-octulosonate from 3-deoxy-D-manno-octulosonate and CTP: step 1/1. Its pathway is bacterial outer membrane biogenesis; lipopolysaccharide biosynthesis. Functionally, activates KDO (a required 8-carbon sugar) for incorporation into bacterial lipopolysaccharide in Gram-negative bacteria. This chain is 3-deoxy-manno-octulosonate cytidylyltransferase, found in Burkholderia thailandensis (strain ATCC 700388 / DSM 13276 / CCUG 48851 / CIP 106301 / E264).